Consider the following 134-residue polypeptide: MGRSRRTGAHRAHSLARQMKAKKRRPDLDEIHRELRPQGLPRPKPEPDAEPDPDLPGGGLHRCLACARYFIDSANLKTHFRSKDHKKRLKQLSVEPYSQEEAERAAGMGSYVQPQRLGVPTEVSTDIPEMDTST.

Residues 1 to 25 (MGRSRRTGAHRAHSLARQMKAKKRR) are compositionally biased toward basic residues. Disordered regions lie at residues 1-58 (MGRS…LPGG) and 85-134 (HKKR…DTST). The segment covering 26 to 36 (PDLDEIHRELR) has biased composition (basic and acidic residues). The C2H2-type zinc-finger motif lies at 61–85 (HRCLACARYFIDSANLKTHFRSKDH).

The protein belongs to the ZNF593/BUD20 C2H2-type zinc-finger protein family. Associates with pre-60S ribosomal particles.

Its subcellular location is the nucleus. The protein resides in the nucleolus. It localises to the cytoplasm. In terms of biological role, involved in pre-60S ribosomal particles maturation by promoting the nuclear export of the 60S ribosome. Negatively modulates the DNA binding activity of Oct-2 and therefore its transcriptional regulatory activity. The polypeptide is Zinc finger protein 593 (Znf593) (Mus musculus (Mouse)).